A 439-amino-acid chain; its full sequence is Thymidine phosphorylase (439 aa).

It belongs to the thymidine/pyrimidine-nucleoside phosphorylase family. Homodimer.

The catalysed reaction is thymidine + phosphate = 2-deoxy-alpha-D-ribose 1-phosphate + thymine. It functions in the pathway pyrimidine metabolism; dTMP biosynthesis via salvage pathway; dTMP from thymine: step 1/2. The enzymes which catalyze the reversible phosphorolysis of pyrimidine nucleosides are involved in the degradation of these compounds and in their utilization as carbon and energy sources, or in the rescue of pyrimidine bases for nucleotide synthesis. The sequence is that of Thymidine phosphorylase from Mesorhizobium japonicum (strain LMG 29417 / CECT 9101 / MAFF 303099) (Mesorhizobium loti (strain MAFF 303099)).